The chain runs to 330 residues: Agamous-like MADS-box protein AGL75 (330 aa).

The 43-residue stretch at 19–61 folds into the MADS-box domain; sequence TSLSNRLETIFKKASELCTLCDIEACVIYYGPDGELKTWPKEK.

In terms of assembly, interacts with MEE14/CBP1.

Its subcellular location is the nucleus. Probable transcription factor that may function in the maintenance of the proper function of the central cell in pollen tube attraction. This chain is Agamous-like MADS-box protein AGL75, found in Arabidopsis thaliana (Mouse-ear cress).